The primary structure comprises 466 residues: Argininosuccinate lyase (466 aa).

Belongs to the lyase 1 family. Argininosuccinate lyase subfamily.

The protein resides in the cytoplasm. The catalysed reaction is 2-(N(omega)-L-arginino)succinate = fumarate + L-arginine. The protein operates within amino-acid biosynthesis; L-arginine biosynthesis; L-arginine from L-ornithine and carbamoyl phosphate: step 3/3. This Methylocella silvestris (strain DSM 15510 / CIP 108128 / LMG 27833 / NCIMB 13906 / BL2) protein is Argininosuccinate lyase.